The following is a 460-amino-acid chain: Kynureninase (460 aa).

Residues Leu-116, Thr-117, 144–147, Ser-199, Asp-228, His-231, and Tyr-253 contribute to the pyridoxal 5'-phosphate site; that span reads FPSD. An N6-(pyridoxal phosphate)lysine modification is found at Lys-254. The pyridoxal 5'-phosphate site is built by Trp-288 and Asn-316.

The protein belongs to the kynureninase family. Homodimer. Pyridoxal 5'-phosphate serves as cofactor.

The protein localises to the cytoplasm. It carries out the reaction L-kynurenine + H2O = anthranilate + L-alanine + H(+). The catalysed reaction is 3-hydroxy-L-kynurenine + H2O = 3-hydroxyanthranilate + L-alanine + H(+). The protein operates within amino-acid degradation; L-kynurenine degradation; L-alanine and anthranilate from L-kynurenine: step 1/1. It functions in the pathway cofactor biosynthesis; NAD(+) biosynthesis; quinolinate from L-kynurenine: step 2/3. Its function is as follows. Catalyzes the cleavage of L-kynurenine (L-Kyn) and L-3-hydroxykynurenine (L-3OHKyn) into anthranilic acid (AA) and 3-hydroxyanthranilic acid (3-OHAA), respectively. In Debaryomyces hansenii (strain ATCC 36239 / CBS 767 / BCRC 21394 / JCM 1990 / NBRC 0083 / IGC 2968) (Yeast), this protein is Kynureninase.